The primary structure comprises 46 residues: Elongation factor Tu (46 aa).

Basic and acidic residues predominate over residues 1–10; sequence MAKGKFERSK. Residues 1–20 are disordered; the sequence is MAKGKFERSKPHVNVGTIGH. Residue 19–26 coordinates GTP; it reads GHVDHGKT.

Belongs to the GTP-binding elongation factor family. EF-Tu/EF-1A subfamily. In terms of assembly, monomer.

The protein localises to the cytoplasm. This protein promotes the GTP-dependent binding of aminoacyl-tRNA to the A-site of ribosomes during protein biosynthesis. This chain is Elongation factor Tu (tufA), found in Eikenella corrodens.